The sequence spans 443 residues: Putative transporter AmpG 1 (443 aa).

Helical transmembrane passes span 6-26 (HVCIIIWLFGFISGFNIMITG), 43-63 (IGILSFITLPYSINFLLAPVF), 74-96 (ILGHRLSWICLTSTTLISLTSIL), 106-128 (VLLSFIAFIISFFSATQDTILSA), 144-164 (GIYIFGYRVGMLLASSGAIYL), 172-192 (KIYQIFACVIFVYLILLILVS), 255-275 (DISLAYFIVLILIFLVLYRLP), 300-320 (VCKFCGVIGAIIGGLIGGIIM), 326-346 (LYSILLFGIIHALSHILFILL), 355-375 (ILFITIGIESITGGMTMTAYI), 394-414 (LSSMMGISRSIFPIISGYMVV), and 416-436 (FGWQNFFLFTTIITIPSLLIL).

It belongs to the major facilitator superfamily.

The protein localises to the cell inner membrane. The chain is Putative transporter AmpG 1 (ampG1) from Rickettsia typhi (strain ATCC VR-144 / Wilmington).